Consider the following 135-residue polypeptide: MRKTKAPEIYALGQHISMSADKARRVIDQIRGRSYEETLMILELMPYRAAYPILKLVYSAASNASYTLDSNEANLFISKAEVNQGPAIKKLKPRARGRSYPIKRPTCHITILLKDISFYDSDSESVELNLLKKAR.

It belongs to the universal ribosomal protein uL22 family. As to quaternary structure, part of the 50S ribosomal subunit.

It localises to the plastid. In terms of biological role, this protein binds specifically to 23S rRNA. The globular domain of the protein is located near the polypeptide exit tunnel on the outside of the subunit, while an extended beta-hairpin is found that lines the wall of the exit tunnel in the center of the 70S ribosome. In Cuscuta reflexa (Southern Asian dodder), this protein is Large ribosomal subunit protein uL22c (rpl22).